The following is a 282-amino-acid chain: 2-dehydro-3-deoxyphosphooctonate aldolase (282 aa).

This sequence belongs to the KdsA family.

The protein localises to the cytoplasm. The catalysed reaction is D-arabinose 5-phosphate + phosphoenolpyruvate + H2O = 3-deoxy-alpha-D-manno-2-octulosonate-8-phosphate + phosphate. Its pathway is carbohydrate biosynthesis; 3-deoxy-D-manno-octulosonate biosynthesis; 3-deoxy-D-manno-octulosonate from D-ribulose 5-phosphate: step 2/3. The protein operates within bacterial outer membrane biogenesis; lipopolysaccharide biosynthesis. In Bartonella bacilliformis (strain ATCC 35685 / KC583 / Herrer 020/F12,63), this protein is 2-dehydro-3-deoxyphosphooctonate aldolase.